Here is a 331-residue protein sequence, read N- to C-terminus: RNA 3'-terminal phosphate cyclase (331 aa).

Residues glutamine 100 and 276 to 280 contribute to the ATP site; that span reads HLADQ. The active-site Tele-AMP-histidine intermediate is the histidine 301.

Belongs to the RNA 3'-terminal cyclase family. Type 1 subfamily.

The protein resides in the cytoplasm. The catalysed reaction is a 3'-end 3'-phospho-ribonucleotide-RNA + ATP = a 3'-end 2',3'-cyclophospho-ribonucleotide-RNA + AMP + diphosphate. Its function is as follows. Catalyzes the conversion of 3'-phosphate to a 2',3'-cyclic phosphodiester at the end of RNA. The mechanism of action of the enzyme occurs in 3 steps: (A) adenylation of the enzyme by ATP; (B) transfer of adenylate to an RNA-N3'P to produce RNA-N3'PP5'A; (C) and attack of the adjacent 2'-hydroxyl on the 3'-phosphorus in the diester linkage to produce the cyclic end product. The biological role of this enzyme is unknown but it is likely to function in some aspects of cellular RNA processing. The sequence is that of RNA 3'-terminal phosphate cyclase from Methanosarcina barkeri (strain Fusaro / DSM 804).